The chain runs to 624 residues: Chaperone protein HtpG (624 aa).

Positions 1 to 336 (MKGQETRGFQ…SSDLSLNVSR (336 aa)) are a; substrate-binding. Residues 337–552 (EILQDSTVTR…ADEMSTQMAK (216 aa)) form a b region. The interval 553–624 (LFAAAGQKVP…IRRMNQLLVS (72 aa)) is c.

It belongs to the heat shock protein 90 family. In terms of assembly, homodimer.

The protein resides in the cytoplasm. Molecular chaperone. Has ATPase activity. The sequence is that of Chaperone protein HtpG from Shigella dysenteriae serotype 1 (strain Sd197).